A 115-amino-acid polypeptide reads, in one-letter code: Selenoprotein K homolog (115 aa).

Residues 29–49 (FIWGILNQITFFFSTLIGGTV) traverse the membrane as a helical segment. The disordered stretch occupies residues 48–115 (TVEPRRRPNN…NSASGSUGPK (68 aa)). Residues 58–84 (QGGGRRLAGFDGNGNVTGGSGVGGSGP) are compositionally biased toward gly residues. Residues 104–115 (ACNSASGSUGPK) are compositionally biased toward polar residues. Residue Sec-112 is a non-standard amino acid, selenocysteine.

The protein belongs to the selenoprotein K family.

The protein localises to the membrane. This chain is Selenoprotein K homolog (selk), found in Dictyostelium discoideum (Social amoeba).